The sequence spans 343 residues: Lumican (343 aa).

Residues 1-18 (MTLNSLPIFLVLISGIFC) form the signal peptide. Position 19 is a pyrrolidone carboxylic acid (Gln-19). Residues Tyr-20 and Tyr-22 each carry the sulfotyrosine modification. The LRRNT domain occupies 31-69 (DPFGPSTAVCAPECNCPLSYPTAMYCDNLKLKTIPIVPS). LRR repeat units lie at residues 70–91 (GIKY…TFDN), 94–117 (DLQW…VFSK), 120–140 (NLKK…PLPK), 141–162 (TLDD…ALEG), 165–186 (NLTV…GAFK), 190–211 (SLLY…LPHS), 212–232 (LLML…YFQG), and 235–255 (TLQY…PGNV). Asn-91 is a glycosylation site (N-linked (GlcNAc...) (keratan sulfate) asparagine). An N-linked (GlcNAc...) (keratan sulfate) asparagine glycan is attached at Asn-130. A glycan (N-linked (GlcNAc...) (keratan sulfate) asparagine) is linked at Asn-165. Asn-257 carries an N-linked (GlcNAc...) (keratan sulfate) asparagine glycan. LRR repeat units lie at residues 260-281 (SLVE…SENL), 282-301 (ENFY…SFCK), and 310-330 (KITH…PQEM). Cys-300 and Cys-333 are oxidised to a cystine. N-linked (GlcNAc...) asparagine glycosylation is present at Asn-320.

This sequence belongs to the small leucine-rich proteoglycan (SLRP) family. SLRP class II subfamily. Binds to laminin. Post-translationally, contains keratan sulfate. In terms of tissue distribution, cornea and other tissues.

The protein localises to the secreted. Its subcellular location is the extracellular space. The protein resides in the extracellular matrix. The chain is Lumican (LUM) from Gallus gallus (Chicken).